The following is a 164-amino-acid chain: Succinate dehydrogenase assembly factor 2, mitochondrial (164 aa).

The N-terminal 27 residues, 1–27, are a transit peptide targeting the mitochondrion; the sequence is MAVVTLIPTLARVLSKHSLLSPLLSVT.

It belongs to the SDHAF2 family. As to quaternary structure, interacts with SDHA within the SDH catalytic dimer.

The protein resides in the mitochondrion matrix. Functionally, plays an essential role in the assembly of succinate dehydrogenase (SDH), an enzyme complex (also referred to as respiratory complex II) that is a component of both the tricarboxylic acid (TCA) cycle and the mitochondrial electron transport chain, and which couples the oxidation of succinate to fumarate with the reduction of ubiquinone (coenzyme Q) to ubiquinol. Required for flavinylation (covalent attachment of FAD) of the flavoprotein subunit SDHA of the SDH catalytic dimer. The sequence is that of Succinate dehydrogenase assembly factor 2, mitochondrial from Rattus norvegicus (Rat).